The chain runs to 266 residues: Type II iodothyronine deiodinase (266 aa).

The Lumenal portion of the chain corresponds to 1–9 (MGLLSVDLL). Residues 10-34 (ITLQILPVFFSNCLFLALYDSVILL) traverse the membrane as a helical; Signal-anchor for type III membrane protein segment. The Cytoplasmic portion of the chain corresponds to 35–266 (KHVALLLSRS…KNFSKRUILD (232 aa)). Selenocysteine 130 is a catalytic residue. Residues selenocysteine 130 and selenocysteine 263 are each a non-standard amino acid (selenocysteine).

It belongs to the iodothyronine deiodinase family. In terms of assembly, predominantly monomer. Can form homodimers but homodimerization is not essential for enzyme activity. Interacts with USP20 and USP33. Interacts with MARCHF6. In terms of processing, ubiquitinated by MARCHF6, leading to its degradation by the proteasome. Deubiquitinated by USP20 and USP33. In terms of tissue distribution, expressed in mammary gland and in brain.

Its subcellular location is the endoplasmic reticulum membrane. It carries out the reaction 3,3',5-triiodo-L-thyronine + iodide + A + H(+) = L-thyroxine + AH2. The catalysed reaction is 3,3'-diiodo-L-thyronine + iodide + A + H(+) = 3,3',5'-triiodo-L-thyronine + AH2. The enzyme catalyses 3'-iodo-L-thyronine + iodide + A + H(+) = 3',5'-diiodo-L-thyronine + AH2. It catalyses the reaction 3,3'-diiodothyronamine + iodide + A + H(+) = 3,3',5'-triiodothyronamine + AH2. It carries out the reaction 3'-iodothyronamine + iodide + A + H(+) = 3',5'-diiodothyronamine + AH2. Plays a crucial role in the metabolism of thyroid hormones (TH) and has specific roles in TH activation and inactivation by deiodination. Catalyzes the deiodination of L-thyroxine (T4) to 3,5,3'-triiodothyronine (T3) and 3,3',5'-triiodothyronine (rT3) to 3,3'-diiodothyronine (3,3'-T2) via outer-ring deiodination (ORD). Catalyzes the deiodination of 3',5'-diiodothyronine (3',5'-T2) to 3'-monoiodothyronine (3'-T1) via ORD. Catalyzes the phenolic ring deiodinations of 3,3',5'-triiodothyronamine and 3',5'- diiodothyronamine. The sequence is that of Type II iodothyronine deiodinase (Dio2) from Mus musculus (Mouse).